Reading from the N-terminus, the 223-residue chain is Ribonuclease 3 (223 aa).

The 131-residue stretch at 1 to 131 (MDGVDELLLR…LIGAVMVDQG (131 aa)) folds into the RNase III domain. Glutamate 44 contributes to the Mg(2+) binding site. Residue aspartate 48 is part of the active site. Residues aspartate 117 and glutamate 120 each coordinate Mg(2+). Residue glutamate 120 is part of the active site. Residues 157-220 (DPKTKLQKLT…AMSALASLEN (64 aa)) form the DRBM domain.

It belongs to the ribonuclease III family. Homodimer. It depends on Mg(2+) as a cofactor.

The protein localises to the cytoplasm. The catalysed reaction is Endonucleolytic cleavage to 5'-phosphomonoester.. Its function is as follows. Digests double-stranded RNA. Involved in the processing of primary rRNA transcript to yield the immediate precursors to the large and small rRNAs (23S and 16S). Processes some mRNAs, and tRNAs when they are encoded in the rRNA operon. Processes pre-crRNA and tracrRNA of type II CRISPR loci if present in the organism. In Tropheryma whipplei (strain Twist) (Whipple's bacillus), this protein is Ribonuclease 3.